We begin with the raw amino-acid sequence, 508 residues long: CUGBP Elav-like family member 2 (508 aa).

Necessary for RNA-binding, TNNT2 exon 5 and NMDA R1 exon 21 inclusion regions lie at residues 1-283 (MRCP…LQNL) and 357-508 (LAGM…SKPY). 3 RRM domains span residues 40–123 (IKMF…PADS), 132–212 (RKLF…FADT), and 423–501 (ANLF…LKRS).

The protein belongs to the CELF/BRUNOL family. In terms of assembly, interacts with A1CF. Expressed in tongue, spleen and brain (at protein level). Expressed in liver, thigh, stomach, lung and heart to very low levels (at protein level). Expressed in heart, brain, lung and muscle.

The protein localises to the nucleus. It localises to the cytoplasm. In terms of biological role, RNA-binding protein implicated in the regulation of several post-transcriptional events. Involved in pre-mRNA alternative splicing, mRNA translation and stability. Mediates exon inclusion and/or exclusion in pre-mRNA that are subject to tissue-specific and developmentally regulated alternative splicing. Specifically activates exon 5 inclusion of TNNT2 in embryonic, but not adult, skeletal muscle. Activates TNNT2 exon 5 inclusion by antagonizing the repressive effect of PTB. Acts both as an activator and as a repressor of a pair of coregulated exons: promotes inclusion of the smooth muscle (SM) exon but exclusion of the non-muscle (NM) exon in actinin pre-mRNAs. Promotes inclusion of exonS 21 and exclusion of exon 5 of the NMDA receptor R1 pre-mRNA. Involved in the apoB RNA editing activity. Increases COX2 mRNA stability and inhibits COX2 mRNA translation in epithelial cells after radiation injury. Modulates the cellular apoptosis program by regulating COX2-mediated prostaglandin E2 (PGE2) expression. Binds to (CUG)n triplet repeats in the 3'-UTR of transcripts such as DMPK. Binds to the muscle-specific splicing enhancer (MSE) intronic sites flanking the TNNT2 alternative exon 5. Binds preferentially to UG-rich sequences, in particular UG repeat and UGUU motifs. Binds to apoB mRNA, specifically to AU-rich sequences located immediately upstream of the edited cytidine. Binds AU-rich sequences in the 3'-UTR of COX2 mRNA. Binds to an intronic RNA element responsible for the silencing of exon 21 splicing. Binds to (CUG)n repeats. May be a specific regulator of miRNA biogenesis. Binds to primary microRNA pri-MIR140 and, with CELF1, negatively regulates the processing to mature miRNA. The chain is CUGBP Elav-like family member 2 (Celf2) from Mus musculus (Mouse).